Here is a 343-residue protein sequence, read N- to C-terminus: TATA box-binding protein-like 2 (343 aa).

Residues 71-152 (PDEVTQENKD…SDSLSLASIT (82 aa)) form a disordered region. Residues 76-90 (QENKDQPVISKHETE) show a composition bias toward basic and acidic residues. Positions 94–127 (ESQSPQSRLPSPSEQDVGLGLNSSSLSNSHSQLH) are enriched in low complexity. Positions 143–152 (SDSLSLASIT) are enriched in polar residues.

The protein belongs to the TBP family. Interacts with TAF3. In terms of tissue distribution, ubiquitously expressed in all tissues examined with highest levels in heart, lung, ovary, spleen and testes.

Its subcellular location is the cytoplasm. It is found in the nucleus. Its function is as follows. Transcription factor required in complex with TAF3 for the differentiation of myoblasts into myocytes. The complex replaces TFIID at specific promoters at an early stage in the differentiation process. In Homo sapiens (Human), this protein is TATA box-binding protein-like 2.